The following is a 144-amino-acid chain: Bacilliredoxin BCE_2233 (144 aa).

This sequence belongs to the bacilliredoxin family.

This chain is Bacilliredoxin BCE_2233, found in Bacillus cereus (strain ATCC 10987 / NRS 248).